The sequence spans 291 residues: Small ribosomal subunit biogenesis GTPase RsgA (291 aa).

Residues 63-221 (ENELKRPPVS…IADTPGFSAL (159 aa)) enclose the CP-type G domain. Residues 112 to 115 (TKKD) and 164 to 172 (GQSGVGKST) each bind GTP. 4 residues coordinate Zn(2+): C245, C250, H252, and C258.

Belongs to the TRAFAC class YlqF/YawG GTPase family. RsgA subfamily. As to quaternary structure, monomer. Associates with 30S ribosomal subunit, binds 16S rRNA. The cofactor is Zn(2+).

It localises to the cytoplasm. Its function is as follows. One of several proteins that assist in the late maturation steps of the functional core of the 30S ribosomal subunit. Helps release RbfA from mature subunits. May play a role in the assembly of ribosomal proteins into the subunit. Circularly permuted GTPase that catalyzes slow GTP hydrolysis, GTPase activity is stimulated by the 30S ribosomal subunit. The chain is Small ribosomal subunit biogenesis GTPase RsgA from Staphylococcus aureus (strain COL).